We begin with the raw amino-acid sequence, 784 residues long: Replication protein A 70 kDa DNA-binding subunit E (784 aa).

Positions 114-224 are disordered; the sequence is HPVPGGKHND…NRGPVARNEA (111 aa). Polar residues-rich tracts occupy residues 132–148 and 167–190; these read KFNTTEQQGSGIRQVNN and SSVPASTTPSTRAYSNPSSGNGVT. Positions 241-327 form a DNA-binding region, OB; sequence WTIKARVTNK…RNDYEIMLDN (87 aa). The C4-type zinc finger occupies 532-558; the sequence is CPIMNGDRPCSKKVTDNGDGTWRCEKC. Disordered stretches follow at residues 678–707 and 746–784; these read LPINPEGSDYNADVVNTGIGSSGTRDPSSV and AKCPGATKPQEQGQYMGGSYRGTTGSYGGGLPRQHVGSY. A compositionally biased stretch (polar residues) spans 695-707; it reads GIGSSGTRDPSSV. The span at 760 to 776 shows a compositional bias: gly residues; it reads YMGGSYRGTTGSYGGGL.

It belongs to the replication factor A protein 1 family. In terms of assembly, heterotrimer of RPA1, RPA2 and RPA3 (canonical replication protein A complex).

Its subcellular location is the nucleus. Its function is as follows. Component of the replication protein A complex (RPA) required for DNA recombination, repair and replication. The activity of RPA is mediated by single-stranded DNA binding and protein interactions. Probably involved in repair of double-strand DNA breaks (DSBs) induced by genotoxic stresses. The chain is Replication protein A 70 kDa DNA-binding subunit E (RPA1E) from Arabidopsis thaliana (Mouse-ear cress).